A 629-amino-acid polypeptide reads, in one-letter code: Ionotropic receptor 75a (629 aa).

Topologically, residues 1-335 are extracellular; that stretch reads MQLVQLANFV…GDVFLQPFSP (335 aa). N-linked (GlcNAc...) asparagine glycans are attached at residues asparagine 61, asparagine 112, asparagine 126, asparagine 144, asparagine 166, and asparagine 232. A helical transmembrane segment spans residues 336–356; it reads LVWYLFGGVLSLIGVLLWITF. The Cytoplasmic segment spans residues 357–374; that stretch reads YMECKRMQKRWRLDYLPS. The chain crosses the membrane as a helical span at residues 375–395; the sequence is LLSTFLISFGAACIQSSSLIP. The Extracellular portion of the chain corresponds to 396–402; that stretch reads RSAGGRL. The helical transmembrane segment at 403–423 threads the bilayer; the sequence is IYFALFLISFIMYNYYTSVVV. Residues 424–592 lie on the Cytoplasmic side of the membrane; the sequence is SSLLSSPVKS…NFVITVGMEY (169 aa). Residues 593–613 traverse the membrane as a helical segment; the sequence is VAPLLLMLICADILVVVILLV. Topologically, residues 614–629 are extracellular; it reads ELAWKRFFTRHLTFHP.

It belongs to the glutamate-gated ion channel (TC 1.A.10.1) family. Expressed in acetic-acid-sensing neurons in the antennal coeloconic 2 (ac2) and antennal coeloconic 3 (ac3) sensilla class of sensory hairs (at protein level).

It is found in the cell membrane. The protein resides in the cell projection. The protein localises to the dendrite. Functionally, odorant receptor for acetic and propionic acid. Functions as part of an olfactory receptor complex including the ionotropic receptor coreceptor Ir8a. This chain is Ionotropic receptor 75a, found in Drosophila melanogaster (Fruit fly).